A 302-amino-acid chain; its full sequence is Quinolinate synthase (302 aa).

H24 and S41 together coordinate iminosuccinate. C86 lines the [4Fe-4S] cluster pocket. Residues 112-114 and S129 each bind iminosuccinate; that span reads YVN. Residue C171 participates in [4Fe-4S] cluster binding. Residues 197-199 and T214 each bind iminosuccinate; that span reads HPE. C259 contacts [4Fe-4S] cluster.

It belongs to the quinolinate synthase family. Type 2 subfamily. [4Fe-4S] cluster is required as a cofactor.

The protein localises to the cytoplasm. It catalyses the reaction iminosuccinate + dihydroxyacetone phosphate = quinolinate + phosphate + 2 H2O + H(+). It functions in the pathway cofactor biosynthesis; NAD(+) biosynthesis; quinolinate from iminoaspartate: step 1/1. Catalyzes the condensation of iminoaspartate with dihydroxyacetone phosphate to form quinolinate. The chain is Quinolinate synthase from Dehalococcoides mccartyi (strain CBDB1).